The following is a 397-amino-acid chain: Succinate--CoA ligase [ADP-forming] subunit beta (397 aa).

One can recognise an ATP-grasp domain in the interval 9–254; that stretch reads KALLRSYGAP…ETEEDPKELA (246 aa). Residues Lys46, 53–55, Glu109, Ser112, and Glu117 contribute to the ATP site; that span reads GRG. Residues Asn209 and Asp223 each coordinate Mg(2+). Substrate is bound by residues Asn274 and 331 to 333; that span reads GIM.

It belongs to the succinate/malate CoA ligase beta subunit family. In terms of assembly, heterotetramer of two alpha and two beta subunits. Mg(2+) is required as a cofactor.

The enzyme catalyses succinate + ATP + CoA = succinyl-CoA + ADP + phosphate. The catalysed reaction is GTP + succinate + CoA = succinyl-CoA + GDP + phosphate. The protein operates within carbohydrate metabolism; tricarboxylic acid cycle; succinate from succinyl-CoA (ligase route): step 1/1. Functionally, succinyl-CoA synthetase functions in the citric acid cycle (TCA), coupling the hydrolysis of succinyl-CoA to the synthesis of either ATP or GTP and thus represents the only step of substrate-level phosphorylation in the TCA. The beta subunit provides nucleotide specificity of the enzyme and binds the substrate succinate, while the binding sites for coenzyme A and phosphate are found in the alpha subunit. The polypeptide is Succinate--CoA ligase [ADP-forming] subunit beta (Cereibacter sphaeroides (strain ATCC 17029 / ATH 2.4.9) (Rhodobacter sphaeroides)).